A 161-amino-acid polypeptide reads, in one-letter code: Phosphopantetheine adenylyltransferase (161 aa).

Thr9 is a binding site for substrate. Residues 9–10 (TF) and His17 contribute to the ATP site. Substrate-binding residues include Lys41, Leu73, and Arg87. ATP-binding positions include 88 to 90 (GLR), Glu98, and 123 to 129 (YQFISGT).

This sequence belongs to the bacterial CoaD family. Homohexamer. Mg(2+) is required as a cofactor.

The protein localises to the cytoplasm. It carries out the reaction (R)-4'-phosphopantetheine + ATP + H(+) = 3'-dephospho-CoA + diphosphate. Its pathway is cofactor biosynthesis; coenzyme A biosynthesis; CoA from (R)-pantothenate: step 4/5. Reversibly transfers an adenylyl group from ATP to 4'-phosphopantetheine, yielding dephospho-CoA (dPCoA) and pyrophosphate. This chain is Phosphopantetheine adenylyltransferase, found in Cupriavidus metallidurans (strain ATCC 43123 / DSM 2839 / NBRC 102507 / CH34) (Ralstonia metallidurans).